Consider the following 84-residue polypeptide: Cytochrome b559 subunit alpha (84 aa).

A helical membrane pass occupies residues 21-35 (VIHSITIPSLFIAGW). Position 23 (His23) interacts with heme.

This sequence belongs to the PsbE/PsbF family. Heterodimer of an alpha subunit and a beta subunit. PSII is composed of 1 copy each of membrane proteins PsbA, PsbB, PsbC, PsbD, PsbE, PsbF, PsbH, PsbI, PsbJ, PsbK, PsbL, PsbM, PsbT, PsbX, PsbY, PsbZ, Psb30/Ycf12, at least 3 peripheral proteins of the oxygen-evolving complex and a large number of cofactors. It forms dimeric complexes. The cofactor is heme b.

It localises to the plastid membrane. In terms of biological role, this b-type cytochrome is tightly associated with the reaction center of photosystem II (PSII). PSII is a light-driven water:plastoquinone oxidoreductase that uses light energy to abstract electrons from H(2)O, generating O(2) and a proton gradient subsequently used for ATP formation. It consists of a core antenna complex that captures photons, and an electron transfer chain that converts photonic excitation into a charge separation. This Cuscuta gronovii (Common dodder) protein is Cytochrome b559 subunit alpha.